We begin with the raw amino-acid sequence, 429 residues long: Transcription factor IIIA (429 aa).

A disordered region spans residues 1 to 45 (MGGEVLNNEGMPLAELKQETIPISRSESSESLNSLTSTRSSSSNR). A compositionally biased stretch (low complexity) spans 24-44 (SRSESSESLNSLTSTRSSSSN). C2H2-type zinc fingers lie at residues 49–74 (YFCDYDGCDKAFTRPSILTEHQLSVH), 80–102 (FQCDKCAKSFVKKSHLERHLYTH), 108–130 (FQCSYCGKGVTTRQQLKRHEVTH), 134–159 (FICPEEGCNLRFYKHPQLRAHILSVH), 163–186 (LTCPHCNKSFQRPYRLRNHISKHH), 194–219 (YQCTFAGCCKEFRIWSQLQSHIKNDH), 222–244 (LKCPICSKPCVGENGLQMHMIIH), 253–277 (WKCHICPDMSFSRKHDLLTHYGSIH), and 365–389 (YRCFYNNCSRTFKTKEKYEKHIDKH). Over residues 406 to 416 (KTLVDQNHKEP) the composition is skewed to basic and acidic residues. Residues 406–429 (KTLVDQNHKEPFIIQKETQSAGDK) form a disordered region.

It is found in the nucleus. Functionally, interacts with the internal control region (ICR) of approximately 50 bases within the 5S RNA genes, is required for correct transcription of these genes by RNA polymerase III. Also binds the transcribed 5S RNA's. In Saccharomyces cerevisiae (strain ATCC 204508 / S288c) (Baker's yeast), this protein is Transcription factor IIIA (PZF1).